Consider the following 139-residue polypeptide: ATP synthase epsilon chain (139 aa).

It belongs to the ATPase epsilon chain family. As to quaternary structure, F-type ATPases have 2 components, CF(1) - the catalytic core - and CF(0) - the membrane proton channel. CF(1) has five subunits: alpha(3), beta(3), gamma(1), delta(1), epsilon(1). CF(0) has three main subunits: a, b and c.

Its subcellular location is the cell membrane. In terms of biological role, produces ATP from ADP in the presence of a proton gradient across the membrane. The chain is ATP synthase epsilon chain from Levilactobacillus brevis (strain ATCC 367 / BCRC 12310 / CIP 105137 / JCM 1170 / LMG 11437 / NCIMB 947 / NCTC 947) (Lactobacillus brevis).